The sequence spans 309 residues: Olfactory receptor 10V1 (309 aa).

Residues 1-25 lie on the Extracellular side of the membrane; the sequence is MEGINKTAKMQFFFRPFSPDPEVQM. An N-linked (GlcNAc...) asparagine glycan is attached at Asn-5. A helical membrane pass occupies residues 26–46; the sequence is LIFVVFLMMYLTSLGGNATIA. Over 47 to 54 the chain is Cytoplasmic; it reads VIVQINHS. The chain crosses the membrane as a helical span at residues 55–75; it reads LHTPMYFFLANLAVLEIFYTS. At 76–100 the chain is on the extracellular side; it reads SITPLALANLLSMGKTPVSITGCGT. An intrachain disulfide couples Cys-98 to Cys-190. A helical membrane pass occupies residues 101 to 121; it reads QMFFFVFLGGADCVLLVVMAY. The Cytoplasmic segment spans residues 122–140; it reads DQFIAICHPLRYRLIMSWS. Residues 141-161 form a helical membrane-spanning segment; it reads LCVELLVGSLVLGFLLSLPLT. Residues 162-198 lie on the Extracellular side of the membrane; it reads ILIFHLPFCHNDEIYHFYCDMPAVMRLACADTRVHKT. Residues 199-218 traverse the membrane as a helical segment; it reads ALYIISFIVLSIPLSLISIS. The Cytoplasmic segment spans residues 219–238; that stretch reads YVFIVVAILRIRSAEGRQQA. The helical transmembrane segment at 239–259 threads the bilayer; the sequence is YSTCSSHILVVLLQYGCTSFI. Over 260–272 the chain is Extracellular; sequence YLSPSSSYSPEMG. A helical transmembrane segment spans residues 273-293; sequence RVVSVAYTFITPILNPLIYSL. Topologically, residues 294-309 are cytoplasmic; it reads RNKELKDALRKALRKF.

The protein belongs to the G-protein coupled receptor 1 family.

The protein resides in the cell membrane. Odorant receptor. The polypeptide is Olfactory receptor 10V1 (OR10V1) (Homo sapiens (Human)).